Consider the following 512-residue polypeptide: Zinc finger CCCH-type with G patch domain-containing protein (512 aa).

The C3H1-type zinc finger occupies 159–186 (QEMVPCAYFLEGDCKFNDEMCRFSHGEL). Residues 255-280 (LEGDDVPSSDSESNSDSDEENEDDVV) form a disordered region. Over residues 256 to 279 (EGDDVPSSDSESNSDSDEENEDDV) the composition is skewed to acidic residues. One can recognise a G-patch domain in the interval 308-354 (TKGIGSKIMLKMGYVVGAGLGSKGEGIVVPVSAQVLPQGRSLDYCMQ). Residues 407 to 417 (SSNGSSSSSGS) are compositionally biased toward low complexity. Residues 407–432 (SSNGSSSSSGSKKPAAKDNQMDLPSC) are disordered.

It is found in the nucleus. In terms of biological role, transcription repressor. This is Zinc finger CCCH-type with G patch domain-containing protein from Aedes aegypti (Yellowfever mosquito).